The primary structure comprises 177 residues: ATP-dependent protease subunit HslV (177 aa).

Thr-6 is a catalytic residue. Positions 162, 165, and 168 each coordinate Na(+).

It belongs to the peptidase T1B family. HslV subfamily. A double ring-shaped homohexamer of HslV is capped on each side by a ring-shaped HslU homohexamer. The assembly of the HslU/HslV complex is dependent on binding of ATP.

It localises to the cytoplasm. The enzyme catalyses ATP-dependent cleavage of peptide bonds with broad specificity.. Its activity is regulated as follows. Allosterically activated by HslU binding. Protease subunit of a proteasome-like degradation complex believed to be a general protein degrading machinery. The protein is ATP-dependent protease subunit HslV of Desulforudis audaxviator (strain MP104C).